A 290-amino-acid polypeptide reads, in one-letter code: Xyloglucan endotransglucosylase/hydrolase protein 9 (290 aa).

Residues 1–26 form the signal peptide; that stretch reads MVGMDLFKCVMMIMVLVVSCGEAVSG. One can recognise a GH16 domain in the interval 27-215; it reads AKFDELYRSS…WSHAPFVASY (189 aa). An N-linked (GlcNAc...) asparagine glycan is attached at N55. The active-site Nucleophile is the E101. E105 serves as the catalytic Proton donor. E105 provides a ligand contact to xyloglucan. N109 carries an N-linked (GlcNAc...) asparagine glycan. Xyloglucan contacts are provided by residues 118 to 120, 128 to 130, 194 to 195, and G199; these read QTN, NRE, and DW. 2 disulfide bridges follow: C223-C234 and C271-C284. R276 serves as a coordination point for xyloglucan.

The protein belongs to the glycosyl hydrolase 16 family. XTH group 1 subfamily. Post-translationally, contains at least one intrachain disulfide bond essential for its enzymatic activity. Highly expressed in shoot apices. In the vegetative and reproductive phases, it accumulates in the shoot apex region, where cell division is most active. In the reproductive phase, it is also expressed in flower buds, flower stalks and internodes bearing flowers.

It is found in the secreted. The protein resides in the cell wall. It localises to the extracellular space. The protein localises to the apoplast. The enzyme catalyses breaks a beta-(1-&gt;4) bond in the backbone of a xyloglucan and transfers the xyloglucanyl segment on to O-4 of the non-reducing terminal glucose residue of an acceptor, which can be a xyloglucan or an oligosaccharide of xyloglucan.. Catalyzes xyloglucan endohydrolysis (XEH) and/or endotransglycosylation (XET). Cleaves and religates xyloglucan polymers, an essential constituent of the primary cell wall, and thereby participates in cell wall construction of growing tissues. Involved in internodal cell elongation. The chain is Xyloglucan endotransglucosylase/hydrolase protein 9 (XTH9) from Arabidopsis thaliana (Mouse-ear cress).